The chain runs to 383 residues: AP-1-like transcription factor YAP6 (383 aa).

Disordered regions lie at residues 1–64 (MQNP…ISVN), 83–113 (DYRS…SYNR), and 168–239 (TLPS…KAFR). The segment covering 13–64 (NQGSSSMATYNASEKNLNEHPSPQIAQPSTSQKLPYRINPTTTNGDTDISVN) has biased composition (polar residues). The segment covering 88-101 (HQSPIHPSYIIPPH) has biased composition (low complexity). A compositionally biased stretch (polar residues) spans 168 to 184 (TLPSRNTSVTTAPPSFQ). Low complexity predominate over residues 185 to 206 (NSADTAKNSADNNDNNDNVTKP). Over residues 213–222 (QLISSSGKTL) the composition is skewed to polar residues. The bZIP domain occupies 221–284 (TLRNTRRAAQ…NDNNILIAQH (64 aa)). Residues 223–247 (RNTRRAAQNRTAQKAFRQRKEKYIK) form a basic motif region. Positions 227–237 (RAAQNRTAQKA) are enriched in low complexity. The segment at 249 to 277 (LEQKSKIFDDLLAENNNFKSLNDSLRNDN) is leucine-zipper.

This sequence belongs to the bZIP family. YAP subfamily. Homodimer.

The protein localises to the nucleus. Functionally, transcription activator involved in the regulation of genes expressed in response to environmental changes and metabolic requirements. According to genome-wide promoter binding and gene expression studies it regulates, among others, genes involved in ribosome biogenesis, protein synthesis, carbohydrate metabolism, and carbohydrate transport. It may also be involved in pleiotropic drug resistance. When overexpressed, it confers resistance to cisplatin, methylmethanosulfonate, and mitomycin C, and increases cellular tolerance to sodium and lithium. In Saccharomyces cerevisiae (strain ATCC 204508 / S288c) (Baker's yeast), this protein is AP-1-like transcription factor YAP6 (YAP6).